The sequence spans 86 residues: Small ribosomal subunit protein bS20 (86 aa).

The interval 1-26 (MANIKSAKKRAITSEKRRQHNASRRS) is disordered.

It belongs to the bacterial ribosomal protein bS20 family.

Binds directly to 16S ribosomal RNA. The sequence is that of Small ribosomal subunit protein bS20 from Photobacterium profundum (strain SS9).